The following is a 560-amino-acid chain: Dihydroxy-acid dehydratase (560 aa).

Cys-52 lines the [2Fe-2S] cluster pocket. Asp-84 serves as a coordination point for Mg(2+). [2Fe-2S] cluster is bound at residue Cys-125. Residues Asp-126 and Lys-127 each coordinate Mg(2+). The residue at position 127 (Lys-127) is an N6-carboxylysine. Cys-197 serves as a coordination point for [2Fe-2S] cluster. Residue Glu-448 participates in Mg(2+) binding. Residue Ser-474 is the Proton acceptor of the active site.

It belongs to the IlvD/Edd family. In terms of assembly, homodimer. [2Fe-2S] cluster serves as cofactor. It depends on Mg(2+) as a cofactor.

The enzyme catalyses (2R)-2,3-dihydroxy-3-methylbutanoate = 3-methyl-2-oxobutanoate + H2O. It carries out the reaction (2R,3R)-2,3-dihydroxy-3-methylpentanoate = (S)-3-methyl-2-oxopentanoate + H2O. It participates in amino-acid biosynthesis; L-isoleucine biosynthesis; L-isoleucine from 2-oxobutanoate: step 3/4. It functions in the pathway amino-acid biosynthesis; L-valine biosynthesis; L-valine from pyruvate: step 3/4. Its function is as follows. Functions in the biosynthesis of branched-chain amino acids. Catalyzes the dehydration of (2R,3R)-2,3-dihydroxy-3-methylpentanoate (2,3-dihydroxy-3-methylvalerate) into 2-oxo-3-methylpentanoate (2-oxo-3-methylvalerate) and of (2R)-2,3-dihydroxy-3-methylbutanoate (2,3-dihydroxyisovalerate) into 2-oxo-3-methylbutanoate (2-oxoisovalerate), the penultimate precursor to L-isoleucine and L-valine, respectively. This Francisella tularensis subsp. novicida (strain U112) protein is Dihydroxy-acid dehydratase.